We begin with the raw amino-acid sequence, 59 residues long: Large ribosomal subunit protein uL30 (59 aa).

This sequence belongs to the universal ribosomal protein uL30 family. Part of the 50S ribosomal subunit.

This chain is Large ribosomal subunit protein uL30, found in Psychrobacter sp. (strain PRwf-1).